The chain runs to 190 residues: Glutathione peroxidase 2 (190 aa).

Sec-40 is an active-site residue. A non-standard amino acid (selenocysteine) is located at residue Sec-40.

The protein belongs to the glutathione peroxidase family. In terms of assembly, homotetramer. In terms of tissue distribution, exclusively expressed in the stomach and small intestine.

The protein localises to the cytoplasm. Its subcellular location is the cytosol. It carries out the reaction 2 glutathione + H2O2 = glutathione disulfide + 2 H2O. The catalysed reaction is a hydroperoxy polyunsaturated fatty acid + 2 glutathione = a hydroxy polyunsaturated fatty acid + glutathione disulfide + H2O. It catalyses the reaction tert-butyl hydroperoxide + 2 glutathione = tert-butanol + glutathione disulfide + H2O. The enzyme catalyses cumene hydroperoxide + 2 glutathione = 2-phenylpropan-2-ol + glutathione disulfide + H2O. It carries out the reaction (13S)-hydroperoxy-(9Z,11E)-octadecadienoate + 2 glutathione = (13S)-hydroxy-(9Z,11E)-octadecadienoate + glutathione disulfide + H2O. The catalysed reaction is (5S)-hydroperoxy-(6E,8Z,11Z,14Z)-eicosatetraenoate + 2 glutathione = (5S)-hydroxy-(6E,8Z,11Z,14Z)-eicosatetraenoate + glutathione disulfide + H2O. It catalyses the reaction (12R)-hydroperoxy-(5Z,8Z,10E,14Z)-eicosatetraenoate + 2 glutathione = (12R)-hydroxy-(5Z,8Z,10E,14Z)-eicosatetraenoate + glutathione disulfide + H2O. The enzyme catalyses (15S)-hydroperoxy-(5Z,8Z,11Z,13E)-eicosatetraenoate + 2 glutathione = (15S)-hydroxy-(5Z,8Z,11Z,13E)-eicosatetraenoate + glutathione disulfide + H2O. In terms of biological role, catalyzes the reduction of hydroperoxides in a glutathione-dependent manner thus regulating cellular redox homeostasis. Can reduce small soluble hydroperoxides such as H2O2, cumene hydroperoxide and tert-butyl hydroperoxide, as well as several fatty acid-derived hydroperoxides. Cannot reduce phosphatidycholine hydroperoxide. The chain is Glutathione peroxidase 2 (GPX2) from Macaca fuscata fuscata (Japanese macaque).